A 121-amino-acid chain; its full sequence is UPF0102 protein Hhal_2103 (121 aa).

A disordered region spans residues 1–20 (MMAPQTTRNDPRQRGQEAEE). Over residues 9 to 20 (NDPRQRGQEAEE) the composition is skewed to basic and acidic residues.

The protein belongs to the UPF0102 family.

The chain is UPF0102 protein Hhal_2103 from Halorhodospira halophila (strain DSM 244 / SL1) (Ectothiorhodospira halophila (strain DSM 244 / SL1)).